The following is a 671-amino-acid chain: DNA ligase (671 aa).

NAD(+) is bound by residues 32-36 (DAEYD), 81-82 (SL), and Glu-113. Lys-115 acts as the N6-AMP-lysine intermediate in catalysis. Arg-136, Glu-173, Lys-290, and Lys-314 together coordinate NAD(+). Zn(2+) is bound by residues Cys-408, Cys-411, Cys-426, and Cys-432. One can recognise a BRCT domain in the interval 593–671 (EIDSPFAGKT…EAEMLRLLGS (79 aa)).

This sequence belongs to the NAD-dependent DNA ligase family. LigA subfamily. Mg(2+) is required as a cofactor. It depends on Mn(2+) as a cofactor.

It carries out the reaction NAD(+) + (deoxyribonucleotide)n-3'-hydroxyl + 5'-phospho-(deoxyribonucleotide)m = (deoxyribonucleotide)n+m + AMP + beta-nicotinamide D-nucleotide.. Its function is as follows. DNA ligase that catalyzes the formation of phosphodiester linkages between 5'-phosphoryl and 3'-hydroxyl groups in double-stranded DNA using NAD as a coenzyme and as the energy source for the reaction. It is essential for DNA replication and repair of damaged DNA. This Escherichia coli O9:H4 (strain HS) protein is DNA ligase.